Reading from the N-terminus, the 418-residue chain is Hepatic and glial cell adhesion molecule (418 aa).

Positions 1–33 (MKREREAPSRAFSALRLAPFVYLLLIQTEPLEG) are cleaved as a signal peptide. One can recognise an Ig-like V-type domain in the interval 34 to 141 (VNITSPVRLI…TGEKTINLTV (108 aa)). Topologically, residues 34 to 240 (VNITSPVRLI…VKITVYRRSS (207 aa)) are extracellular. N-linked (GlcNAc...) asparagine glycans are attached at residues Asn-35, Asn-138, Asn-167, and Asn-189. Residues 148–234 (PQVLVASTTV…QGRSPPVKIT (87 aa)) enclose the Ig-like C2-type domain. Cys-168 and Cys-217 form a disulfide bridge. The chain crosses the membrane as a helical span at residues 241-261 (LYIILSTGGIFLLVTLVTVCA). The Cytoplasmic portion of the chain corresponds to 262-418 (CWKPSKKSGK…DEAGPVEISA (157 aa)). Residues 271-418 (KKRKLEKQNS…DEAGPVEISA (148 aa)) form a disordered region. Ser-280 carries the post-translational modification Phosphoserine. The segment covering 287-308 (SDDRLKPEADTLPRSGEQERKN) has biased composition (basic and acidic residues). Ser-352 and Ser-379 each carry phosphoserine. Over residues 385–400 (GSPGRSRSASRTLRTA) the composition is skewed to low complexity.

As to quaternary structure, homodimer. Dimer formation occurs predominantly through cis interactions on the cell surface. Part of a complex containing MLC1, TRPV4, AQP4 and ATP1B1. Interacts with CLCN2. Post-translationally, N-glycosylated.

Its subcellular location is the cytoplasm. It is found in the cell membrane. Involved in regulating cell motility and cell-matrix interactions. May inhibit cell growth through suppression of cell proliferation. In glia, associates and targets CLCN2 at astrocytic processes and myelinated fiber tracts where it may regulate transcellular chloride flux involved in neuron excitability. In Bos taurus (Bovine), this protein is Hepatic and glial cell adhesion molecule.